The chain runs to 311 residues: Putative dihydroorotate dehydrogenase A (fumarate) (311 aa).

Substrate-binding positions include K45, 69 to 73 (NSMGL), and N128. 45-46 (KT) lines the FMN pocket. N128 is an FMN binding site. The active-site Nucleophile is C131. Positions 165 and 193 each coordinate FMN. 194 to 195 (NS) lines the substrate pocket. FMN contacts are provided by residues G220, 248–249 (GG), and 270–271 (GT).

This sequence belongs to the dihydroorotate dehydrogenase family. Type 1 subfamily. As to quaternary structure, homodimer. It depends on FMN as a cofactor.

The protein resides in the cytoplasm. It catalyses the reaction (S)-dihydroorotate + fumarate = orotate + succinate. It participates in pyrimidine metabolism; UMP biosynthesis via de novo pathway. In terms of biological role, catalyzes the conversion of dihydroorotate to orotate with fumarate as the electron acceptor. The protein is Putative dihydroorotate dehydrogenase A (fumarate) (pyrD) of Streptococcus equi subsp. equi (strain 4047).